A 349-amino-acid polypeptide reads, in one-letter code: Short chain dehydrogenase/reductase dpfgH (349 aa).

The helical transmembrane segment at 9-31 (LCIRVVDSLYGSFLYLPLAILFL) threads the bilayer. Isoleucine 65, arginine 89, and aspartate 115 together coordinate NADP(+). N-linked (GlcNAc...) asparagine glycosylation occurs at asparagine 118. Residues asparagine 142 and lysine 164 each coordinate NADP(+). Catalysis depends on proton donor residues serine 191 and serine 192. NADP(+) contacts are provided by tyrosine 223 and lysine 227. Tyrosine 223 serves as the catalytic Proton acceptor. The active-site Lowers pKa of active site Tyr is the lysine 227. Asparagine 334 carries N-linked (GlcNAc...) asparagine glycosylation.

It belongs to the short-chain dehydrogenases/reductases (SDR) family.

Its subcellular location is the membrane. It participates in secondary metabolite biosynthesis; terpenoid biosynthesis. Short chain dehydrogenase/reductase; part of the gene cluster that mediates the biosynthesis of diterpenoid pyrones. The first step of the pathway is the synthesis of the alpha-pyrone moiety by the polyketide synthase dpfgA via condensation of one acetyl-CoA starter unit with 3 malonyl-CoA units and 2 methylations. The alpha-pyrone is then combined with geranylgeranyl pyrophosphate (GGPP) formed by the GGPP synthase dpfgD through the action of the prenyltransferase dpfgC to yield a linear alpha-pyrone diterpenoid. Subsequent steps in the diterpenoid pyrone biosynthetic pathway involve the decalin core formation, which is initiated by the epoxidation of the C10-C11 olefin by the FAD-dependent oxidoreductase dpfgE, and is followed by a cyclization cascade catalyzed by the terpene cyclase dpfgB. The short chain dehydrogenase/reductase dpfgG then oxidizes the 8S hydroxy group to a ketone and the short chain dehydrogenase/reductase dpfgH reduces the ketone to the 8R hydroxy group to yield higginsianin B. Higginsianin B is further methylated by the methyltransferase dpfgI to produce the intermediate named FDDP B. The cytochrome P450 monooxygenase dfgpJ then catalyzes a three-step oxidation at C-27 to generate a carboxylic acid as well as C-26 hydroxylation. Finally, methyltransferase dpfgK methylates the carboxylic acid generated by dpfgJ, yielding the final diterpenoid pyrones from the pathway which were named FDDP D and FDDP E. The polypeptide is Short chain dehydrogenase/reductase dpfgH (Gibberella zeae (strain ATCC MYA-4620 / CBS 123657 / FGSC 9075 / NRRL 31084 / PH-1) (Wheat head blight fungus)).